A 209-amino-acid chain; its full sequence is Guanylate kinase (209 aa).

Positions 5 to 184 (GLLIVFSGPS…AAERVKRVIE (180 aa)) constitute a Guanylate kinase-like domain. 12-19 (GPSGVGKG) serves as a coordination point for ATP.

It belongs to the guanylate kinase family.

It is found in the cytoplasm. The enzyme catalyses GMP + ATP = GDP + ADP. Essential for recycling GMP and indirectly, cGMP. The chain is Guanylate kinase from Streptococcus agalactiae serotype Ia (strain ATCC 27591 / A909 / CDC SS700).